The primary structure comprises 199 residues: Protein-methionine-sulfoxide reductase heme-binding subunit MsrQ (199 aa).

The next 4 helical transmembrane spans lie at 10–30 (WLKV…FWAI), 82–102 (LWCF…ELGI), 116–136 (PYLT…LTST), and 153–173 (VVYL…KILS).

Belongs to the MsrQ family. In terms of assembly, heterodimer of a catalytic subunit (MsrP) and a heme-binding subunit (MsrQ). Requires FMN as cofactor. The cofactor is heme b.

The protein localises to the cell inner membrane. Part of the MsrPQ system that repairs oxidized periplasmic proteins containing methionine sulfoxide residues (Met-O), using respiratory chain electrons. Thus protects these proteins from oxidative-stress damage caused by reactive species of oxygen and chlorine generated by the host defense mechanisms. MsrPQ is essential for the maintenance of envelope integrity under bleach stress, rescuing a wide series of structurally unrelated periplasmic proteins from methionine oxidation, including the primary periplasmic chaperone SurA and the lipoprotein Pal. MsrQ provides electrons for reduction to the reductase catalytic subunit MsrP, using the quinone pool of the respiratory chain. This is Protein-methionine-sulfoxide reductase heme-binding subunit MsrQ from Salmonella newport (strain SL254).